Here is a 152-residue protein sequence, read N- to C-terminus: Ribonuclease pancreatic (152 aa).

A signal peptide spans Met-1–Gly-24. Substrate-binding residues include Lys-31 and Arg-34. The active-site Proton acceptor is His-36. Asn-46 carries an N-linked (GlcNAc...) asparagine glycan. 4 disulfide bridges follow: Cys-50/Cys-108, Cys-64/Cys-119, Cys-82/Cys-134, and Cys-89/Cys-96. Substrate-binding positions include Lys-65–Thr-69, Lys-90, and Arg-109. Asn-112 carries an N-linked (GlcNAc...) asparagine glycan. His-143 functions as the Proton donor in the catalytic mechanism.

This sequence belongs to the pancreatic ribonuclease family. In terms of assembly, monomer. Interacts with and forms tight 1:1 complexes with RNH1. Dimerization of two such complexes may occur. Interaction with RNH1 inhibits this protein.

It localises to the secreted. It catalyses the reaction an [RNA] containing cytidine + H2O = an [RNA]-3'-cytidine-3'-phosphate + a 5'-hydroxy-ribonucleotide-3'-[RNA].. It carries out the reaction an [RNA] containing uridine + H2O = an [RNA]-3'-uridine-3'-phosphate + a 5'-hydroxy-ribonucleotide-3'-[RNA].. In terms of biological role, endonuclease that catalyzes the cleavage of RNA on the 3' side of pyrimidine nucleotides. Acts on single-stranded and double-stranded RNA. The sequence is that of Ribonuclease pancreatic (RNASE1) from Miopithecus talapoin (Angolan talapoin).